A 447-amino-acid chain; its full sequence is Monocarboxylate transporter 11 (447 aa).

Residues 1-11 (MTPKPAGPPDG) are Cytoplasmic-facing. Transmembrane regions (helical) follow at residues 12 to 32 (GWGW…YGLL), 54 to 74 (AWVS…GSAL), 80 to 100 (ARPV…FSAF), 107 to 127 (LYLG…APAL), 139 to 159 (VLAV…LAPA), 162 to 182 (FLLD…VTLH), 219 to 239 (AFSV…VPYV), 249 to 269 (GMGG…DACA), 288 to 308 (LVVF…VPTV), 330 to 350 (GSYA…GGVV), 354 to 374 (GLVM…SGFL), and 383 to 403 (ASFL…MGLP). At 404–447 (RALPSCRPASPPATPPPERGELLPVPQVSLLSAGGTGSIRDTTC) the chain is on the cytoplasmic side.

The protein belongs to the major facilitator superfamily. Monocarboxylate porter (TC 2.A.1.13) family. As to quaternary structure, interacts with isoform 2 of BSG.

The protein localises to the endoplasmic reticulum membrane. Its subcellular location is the cell membrane. It carries out the reaction pyruvate(out) + H(+)(out) = pyruvate(in) + H(+)(in). In terms of biological role, proton-linked monocarboxylate transporter. It catalyzes the transport of pyruvate across the plasma membrane. Probably involved in hepatic lipid metabolism: overexpression results in an increase of triacylglycerol(TAG) levels, small increases in intracellular diacylglycerols and decreases in lysophosphatidylcholine, cholesterol ester and sphingomyelin lipids. This is Monocarboxylate transporter 11 (Slc16a11) from Mus musculus (Mouse).